The sequence spans 428 residues: Autophagy-related protein 14 (428 aa).

A coiled-coil region spans residues Gln82–Asp143.

This sequence belongs to the ATG14 family. As to quaternary structure, component of the autophagy-specific VPS34 PI3-kinase complex I.

It localises to the preautophagosomal structure membrane. Its subcellular location is the vacuole membrane. Its function is as follows. Required for cytoplasm to vacuole transport (Cvt) and autophagy as a part of the autophagy-specific VPS34 PI3-kinase complex I. This complex is essential to recruit the ATG8-phosphatidylinositol conjugate and the ATG12-ATG5 conjugate to the pre-autophagosomal structure. ATG14 mediates the specific binding of the VPS34 PI3-kinase complex I to the preautophagosomal structure (PAS). Plays a crucial role in hyphal development, conidiogenesis and pathogenicity. Also required for glycogen mobilization, quantity of lipid bodies, and the turgor pressure of appressoria. This Pyricularia oryzae (strain 70-15 / ATCC MYA-4617 / FGSC 8958) (Rice blast fungus) protein is Autophagy-related protein 14.